Reading from the N-terminus, the 101-residue chain is MAKTSMKAREAKRAKLVAKFATKRTELKAIIVDMNASEEARWDAVLQLQQLPRDSSPSRQRNRCNITGRPHGFLRKFGLSRIKVREHAMKGEIPGLKKASW.

The protein belongs to the universal ribosomal protein uS14 family. As to quaternary structure, part of the 30S ribosomal subunit. Contacts proteins S3 and S10.

Its function is as follows. Binds 16S rRNA, required for the assembly of 30S particles and may also be responsible for determining the conformation of the 16S rRNA at the A site. This chain is Small ribosomal subunit protein uS14, found in Aeromonas salmonicida (strain A449).